A 415-amino-acid chain; its full sequence is Homoserine O-succinyltransferase (415 aa).

Positions 1–26 (MTSPALTAASVTPSRNTTSPDTTSHR) are enriched in polar residues. The disordered stretch occupies residues 1–27 (MTSPALTAASVTPSRNTTSPDTTSHRP). One can recognise an AB hydrolase-1 domain in the interval 71–386 (NAVLICHALN…HGHDAFLLED (316 aa)). The Nucleophile role is filled by serine 177. Arginine 247 serves as a coordination point for substrate. Residues aspartate 346 and histidine 379 contribute to the active site. Aspartate 380 is a substrate binding site.

It belongs to the AB hydrolase superfamily. MetX family. As to quaternary structure, homodimer.

It localises to the cytoplasm. The enzyme catalyses L-homoserine + succinyl-CoA = O-succinyl-L-homoserine + CoA. The protein operates within amino-acid biosynthesis; L-methionine biosynthesis via de novo pathway; O-succinyl-L-homoserine from L-homoserine: step 1/1. Functionally, transfers a succinyl group from succinyl-CoA to L-homoserine, forming succinyl-L-homoserine. This chain is Homoserine O-succinyltransferase, found in Bordetella avium (strain 197N).